The primary structure comprises 437 residues: GTPase Der (437 aa).

2 EngA-type G domains span residues asparagine 3–glycine 167 and proline 176–threonine 352. GTP-binding positions include glycine 9–serine 16, aspartate 56–tryptophan 60, asparagine 119–aspartate 122, glycine 182–serine 189, aspartate 229–isoleucine 233, and asparagine 294–aspartate 297. One can recognise a KH-like domain in the interval threonine 353–lysine 437.

The protein belongs to the TRAFAC class TrmE-Era-EngA-EngB-Septin-like GTPase superfamily. EngA (Der) GTPase family. Associates with the 50S ribosomal subunit.

In terms of biological role, GTPase that plays an essential role in the late steps of ribosome biogenesis. The protein is GTPase Der of Phocaeicola vulgatus (strain ATCC 8482 / DSM 1447 / JCM 5826 / CCUG 4940 / NBRC 14291 / NCTC 11154) (Bacteroides vulgatus).